A 312-amino-acid chain; its full sequence is Aspartate carbamoyltransferase catalytic subunit (312 aa).

Carbamoyl phosphate-binding residues include Arg58 and Thr59. Lys86 is an L-aspartate binding site. Residues Arg108, His136, and Gln139 each contribute to the carbamoyl phosphate site. L-aspartate is bound by residues Arg169 and Arg223. Residues Gly264 and Pro265 each contribute to the carbamoyl phosphate site.

The protein belongs to the aspartate/ornithine carbamoyltransferase superfamily. ATCase family. In terms of assembly, heterododecamer (2C3:3R2) of six catalytic PyrB chains organized as two trimers (C3), and six regulatory PyrI chains organized as three dimers (R2).

It carries out the reaction carbamoyl phosphate + L-aspartate = N-carbamoyl-L-aspartate + phosphate + H(+). It functions in the pathway pyrimidine metabolism; UMP biosynthesis via de novo pathway; (S)-dihydroorotate from bicarbonate: step 2/3. In terms of biological role, catalyzes the condensation of carbamoyl phosphate and aspartate to form carbamoyl aspartate and inorganic phosphate, the committed step in the de novo pyrimidine nucleotide biosynthesis pathway. This chain is Aspartate carbamoyltransferase catalytic subunit, found in Heliobacterium modesticaldum (strain ATCC 51547 / Ice1).